We begin with the raw amino-acid sequence, 170 residues long: Large ribosomal subunit protein uL11 (170 aa).

Belongs to the universal ribosomal protein uL11 family. In terms of assembly, part of the ribosomal stalk of the 50S ribosomal subunit. Interacts with L10 and the large rRNA to form the base of the stalk. L10 forms an elongated spine to which L12 dimers bind in a sequential fashion forming a multimeric L10(L12)X complex.

Its function is as follows. Forms part of the ribosomal stalk which helps the ribosome interact with GTP-bound translation factors. The protein is Large ribosomal subunit protein uL11 of Desulfurococcus amylolyticus (strain DSM 18924 / JCM 16383 / VKM B-2413 / 1221n) (Desulfurococcus kamchatkensis).